We begin with the raw amino-acid sequence, 236 residues long: Calcium-binding lectin RapA2 (236 aa).

The protein resides in the secreted. Functionally, interacts specifically in a calcium-dependent manner with the acidic exopolysaccharide (EPS) and capsular polysaccharide produced by R.leguminosarum. Could be involved in the development of the biofilm matrix made of EPS. The sequence is that of Calcium-binding lectin RapA2 from Rhizobium johnstonii (strain DSM 114642 / LMG 32736 / 3841) (Rhizobium leguminosarum bv. viciae).